The sequence spans 328 residues: Nucleotide-binding protein BLD_0430 (328 aa).

Positions 1–35 (MNQQTTNRDTGEAAATNAPANSATSTSTPDNQPTP) are disordered. Over residues 13-29 (AAATNAPANSATSTSTP) the composition is skewed to low complexity. Residue 46–53 (GMSGAGRS) participates in ATP binding. 101 to 104 (DVRS) is a GTP binding site.

This sequence belongs to the RapZ-like family.

Its function is as follows. Displays ATPase and GTPase activities. The sequence is that of Nucleotide-binding protein BLD_0430 from Bifidobacterium longum (strain DJO10A).